The sequence spans 157 residues: Ribosome maturation factor RimP (157 aa).

It belongs to the RimP family.

It is found in the cytoplasm. Its function is as follows. Required for maturation of 30S ribosomal subunits. The sequence is that of Ribosome maturation factor RimP from Lactococcus lactis subsp. cremoris (strain MG1363).